A 194-amino-acid chain; its full sequence is Imidazoleglycerol-phosphate dehydratase (194 aa).

The protein belongs to the imidazoleglycerol-phosphate dehydratase family.

Its subcellular location is the cytoplasm. It carries out the reaction D-erythro-1-(imidazol-4-yl)glycerol 3-phosphate = 3-(imidazol-4-yl)-2-oxopropyl phosphate + H2O. Its pathway is amino-acid biosynthesis; L-histidine biosynthesis; L-histidine from 5-phospho-alpha-D-ribose 1-diphosphate: step 6/9. This Streptococcus sanguinis (strain SK36) protein is Imidazoleglycerol-phosphate dehydratase.